Consider the following 601-residue polypeptide: Elongation factor 4 (601 aa).

The region spanning 6–188 (SHIRNFSIIA…QIVHRVPAPE (183 aa)) is the tr-type G domain. Residues 18-23 (DHGKST) and 135-138 (NKID) contribute to the GTP site.

It belongs to the TRAFAC class translation factor GTPase superfamily. Classic translation factor GTPase family. LepA subfamily.

The protein localises to the cell inner membrane. The enzyme catalyses GTP + H2O = GDP + phosphate + H(+). Functionally, required for accurate and efficient protein synthesis under certain stress conditions. May act as a fidelity factor of the translation reaction, by catalyzing a one-codon backward translocation of tRNAs on improperly translocated ribosomes. Back-translocation proceeds from a post-translocation (POST) complex to a pre-translocation (PRE) complex, thus giving elongation factor G a second chance to translocate the tRNAs correctly. Binds to ribosomes in a GTP-dependent manner. This Anaeromyxobacter dehalogenans (strain 2CP-1 / ATCC BAA-258) protein is Elongation factor 4.